The following is a 397-amino-acid chain: Chorismate synthase (397 aa).

NADP(+) is bound by residues Arg40 and Arg46. FMN contacts are provided by residues 129–131 (RAS), 257–258 (QA), Gly302, 317–321 (KPIAT), and Arg343.

The protein belongs to the chorismate synthase family. In terms of assembly, homotetramer. FMNH2 is required as a cofactor.

The enzyme catalyses 5-O-(1-carboxyvinyl)-3-phosphoshikimate = chorismate + phosphate. It participates in metabolic intermediate biosynthesis; chorismate biosynthesis; chorismate from D-erythrose 4-phosphate and phosphoenolpyruvate: step 7/7. Functionally, catalyzes the anti-1,4-elimination of the C-3 phosphate and the C-6 proR hydrogen from 5-enolpyruvylshikimate-3-phosphate (EPSP) to yield chorismate, which is the branch point compound that serves as the starting substrate for the three terminal pathways of aromatic amino acid biosynthesis. This reaction introduces a second double bond into the aromatic ring system. The chain is Chorismate synthase from Chlorobium phaeobacteroides (strain BS1).